The sequence spans 335 residues: Dihydroorotate dehydrogenase (quinone) (335 aa).

Residues 61-65 (AGLDK) and threonine 85 each bind FMN. Residue lysine 65 participates in substrate binding. 110–114 (NRMGF) is a substrate binding site. FMN is bound by residues asparagine 138 and asparagine 171. Asparagine 171 is a binding site for substrate. Serine 174 (nucleophile) is an active-site residue. Asparagine 176 contacts substrate. The FMN site is built by lysine 216 and threonine 244. A substrate-binding site is contributed by 245–246 (NT). Residues glycine 267, glycine 296, and 317–318 (YS) each bind FMN.

This sequence belongs to the dihydroorotate dehydrogenase family. Type 2 subfamily. Monomer. It depends on FMN as a cofactor.

Its subcellular location is the cell membrane. It carries out the reaction (S)-dihydroorotate + a quinone = orotate + a quinol. Its pathway is pyrimidine metabolism; UMP biosynthesis via de novo pathway; orotate from (S)-dihydroorotate (quinone route): step 1/1. Functionally, catalyzes the conversion of dihydroorotate to orotate with quinone as electron acceptor. The sequence is that of Dihydroorotate dehydrogenase (quinone) from Pseudoalteromonas atlantica (strain T6c / ATCC BAA-1087).